The primary structure comprises 359 residues: MESNYQRTLVSAFLNISVDQTVETAIKCLKSTNWKLEDAINLLFAIDRMRNNQTLTLKPSDSTRLPSLSPPPPLNLLFNGSFEDAKLASSSKDLWLLVHIQSETEFPCNTFNRDLWSNEDVSQALEFRFMLWQVYDHTSEGRKITSFYMIQHFLIDPITGQNICIWRGEIKAKGFLKDLKKYIDASPHEHIASTARNMRVKAEKICHSDQQDMVGFTDDDFDDFDEGNLSSDSVVVSSCGREFDDVVTLSEDEEETCLSSDLFEFPVLTKEPKGDCDRSVVCSISVRFPNGRRKQRKFLKSEPVQLLWSFCYSHMDESDNKAFKLVQAIPGASKTLDYGAEASFDQYGIANSIISVTWE.

A UBX domain is found at 277–357 (DRSVVCSISV…GIANSIISVT (81 aa)).

The chain is Putative plant UBX domain-containing protein 15 from Arabidopsis thaliana (Mouse-ear cress).